The chain runs to 724 residues: Cyclin-T1 (724 aa).

S117 is subject to Phosphoserine. The Nuclear localization signal signature appears at 253-270 (KRIRNWRAYQAAMKTKPD). Residue K342 forms a Glycyl lysine isopeptide (Lys-Gly) (interchain with G-Cter in SUMO2) linkage. Positions 384 to 425 (SAKVSLKEYRAKHAEELAAQKRQLENMEANVKSQYAYAAQNL) form a coiled coil. S388 is subject to Phosphoserine. Position 390 is an N6-acetyllysine (K390). A Glycyl lysine isopeptide (Lys-Gly) (interchain with G-Cter in SUMO2) cross-link involves residue K415. Residues S416, S473, and S474 each carry the ADP-ribosylserine modification. The segment at 479-549 (IKMRIKVHSA…RPSDPKHSSQ (71 aa)) is histidine-rich domain (HRD). Residue K480 forms a Glycyl lysine isopeptide (Lys-Gly) (interchain with G-Cter in SUMO2) linkage. Residues 483-507 (IKVHSAGDKHNSIEDSVTKSREHKE) show a composition bias toward basic and acidic residues. 2 disordered regions span residues 483 to 586 (IKVH…VFDH) and 691 to 724 (PRAG…PLPK). K484 carries the N6-(ADP-ribosyl)lysine modification. The residue at position 486 (H486) is an ADP-ribosylhistidine. S494 and S498 each carry phosphoserine. Residues 508–529 (KQRTHPSNHHHHHNHHSHRHSH) show a composition bias toward basic residues. ADP-ribosylhistidine is present on H529. 2 positions are modified to ADP-ribosylserine: S548 and S551. H555 is subject to ADP-ribosylhistidine. Over residues 559–569 (SLSSTLSSSSS) the composition is skewed to low complexity. ADP-ribosylserine is present on S562. Residues 708-724 (PPPLPSEPPPPLPPLPK) are compositionally biased toward pro residues.

Belongs to the cyclin family. Cyclin C subfamily. As to quaternary structure, cyclin-T1 is the predominant cyclin that associates with CDK9 to form a heterodimer called P-TEFb. P-TEFb forms a complex with AFF4/AF5Q31. Component of a complex which is at least composed of HTATSF1/Tat-SF1, P-TEFb complex, RNA pol II, SUPT5H, and NCL/nucleolin. Component of the 7SK snRNP complex at least composed of P-TEFb (composed of CDK9 and CCNT1/cyclin-T1), HEXIM1, HEXIM2, BCDIN3, SART3 proteins and 7SK and U6 snRNAs. Interacts (via central region) with ZMYND8 (via N-terminus); the interaction is direct and the association appears to occur between homodimeric ZMYND8 and the activated form of the P-TEFb complex. Interacts with BRD4, targets chromatin binding. Interacts with JMJD6. Interacts with MDFIC. Interacts with HSF1. Interacts with HTATSF1. Interacts with TBX21. Post-translationally, ADP-ribosylation on serine residues by PARP1 in response to DNA damage disrupts the phase separation activity of CCNT1, thereby preventing activation of CDK9.

The protein localises to the nucleus. Functionally, regulatory subunit of the cyclin-dependent kinase pair (CDK9/cyclin-T1) complex, also called positive transcription elongation factor B (P-TEFb), which facilitates the transition from abortive to productive elongation by phosphorylating the CTD (C-terminal domain) of the large subunit of RNA polymerase II (RNA Pol II). Required to activate the protein kinase activity of CDK9: acts by mediating formation of liquid-liquid phase separation (LLPS) that enhances binding of P-TEFb to the CTD of RNA Pol II. The polypeptide is Cyclin-T1 (Ccnt1) (Mus musculus (Mouse)).